The chain runs to 253 residues: U2 small nuclear ribonucleoprotein A' (253 aa).

LRR repeat units lie at residues 19–40 (KDRE…GIAK), 41–62 (DQDA…PFFP), 63–84 (RLHT…IAST), and 87–108 (NLTT…DPLR). Residues 121–159 (NPVTRKEHYRYWVIWRIPSVRFLDYQKVKDAERAKAKEL) enclose the LRRCT domain. Positions 228–253 (ELNEGRIPGGALDAGEDSEDENQMQT) are disordered. Residues 241–253 (AGEDSEDENQMQT) are compositionally biased toward acidic residues.

This sequence belongs to the U2 small nuclear ribonucleoprotein A family. Associated with the spliceosome.

The protein localises to the nucleus. Functionally, involved in pre-mRNA splicing. This Aspergillus fumigatus (strain ATCC MYA-4609 / CBS 101355 / FGSC A1100 / Af293) (Neosartorya fumigata) protein is U2 small nuclear ribonucleoprotein A' (lea1).